Reading from the N-terminus, the 218-residue chain is Adenylate kinase (218 aa).

Residue 11–16 (GAGKGT) participates in ATP binding. Residues 31–60 (STGDMFREAMANKTKVGLEAKSYIDKGNLV) form an NMP region. AMP is bound by residues Thr-32, Arg-37, 58 to 60 (NLV), 86 to 89 (GFPR), and Gln-93. The tract at residues 127–165 (ARYMCKNCGATYNKLSKQPKVEGTCDRCGSHEFYQREDD) is LID. Residue Arg-128 coordinates ATP. Residues Cys-131 and Cys-134 each coordinate Zn(2+). 137-138 (TY) serves as a coordination point for ATP. Cys-151 and Cys-154 together coordinate Zn(2+). Arg-162 and Arg-173 together coordinate AMP. Gln-201 contacts ATP.

It belongs to the adenylate kinase family. In terms of assembly, monomer.

It localises to the cytoplasm. It catalyses the reaction AMP + ATP = 2 ADP. It functions in the pathway purine metabolism; AMP biosynthesis via salvage pathway; AMP from ADP: step 1/1. In terms of biological role, catalyzes the reversible transfer of the terminal phosphate group between ATP and AMP. Plays an important role in cellular energy homeostasis and in adenine nucleotide metabolism. The chain is Adenylate kinase from Lactobacillus helveticus (strain DPC 4571).